Consider the following 634-residue polypeptide: Mitochondrial Rho GTPase 1 (634 aa).

At 1 to 604 the chain is on the cytoplasmic side; sequence MLCCMRICVC…PRSEEDVEGK (604 aa). Residues 2 to 171 enclose the Miro 1 domain; it reads LCCMRICVCG…FFLCQKAVTH (170 aa). GTP is bound by residues 11 to 18, 60 to 64, and 116 to 119; these read GDEGTGKS, DTSAV, and NKSD. EF-hand domains lie at 187–222 and 307–342; these read AAVA…CFEK and EGYR…TPGL. Ca(2+)-binding residues include Asp200, Asp202, Asp204, Tyr206, Glu211, Asp320, Asp322, Asp324, and Glu331. The interval 399–419 is disordered; sequence NPSTTAALKVTRPRKRRKRPG. The segment covering 409–419 has biased composition (basic residues); it reads TRPRKRRKRPG. The Miro 2 domain maps to 423-589; sequence RNVVLGHIVG…FVHIAEAAME (167 aa). Residues 432–439, 468–472, and 538–541 contribute to the GTP site; these read GAPGSGKS, ELPGG, and LKAD. A helical; Anchor for type IV membrane protein membrane pass occupies residues 605-625; the sequence is WMSWGIALGAVVCAGAAAVMI. Residues 626 to 634 are Mitochondrial intermembrane-facing; that stretch reads WRRVSGSGV.

This sequence belongs to the mitochondrial Rho GTPase family.

The protein resides in the mitochondrion outer membrane. Functionally, mitochondrial GTPase involved in mitochondrial trafficking. Probably involved in control of anterograde transport of mitochondria and their subcellular distribution. This is Mitochondrial Rho GTPase 1 (gem1) from Emericella nidulans (strain FGSC A4 / ATCC 38163 / CBS 112.46 / NRRL 194 / M139) (Aspergillus nidulans).